A 52-amino-acid chain; its full sequence is Large ribosomal subunit protein bL32c (52 aa).

This sequence belongs to the bacterial ribosomal protein bL32 family.

It is found in the plastid. The protein resides in the chloroplast. This chain is Large ribosomal subunit protein bL32c, found in Morus indica (Mulberry).